Here is a 266-residue protein sequence, read N- to C-terminus: Glucosamine-6-phosphate deaminase (266 aa).

The active-site Proton acceptor; for enolization step is the Asp-72. Catalysis depends on Asp-141, which acts as the For ring-opening step. His-143 serves as the catalytic Proton acceptor; for ring-opening step. The active-site For ring-opening step is the Glu-148.

This sequence belongs to the glucosamine/galactosamine-6-phosphate isomerase family. NagB subfamily. As to quaternary structure, homohexamer; trimer of disulfide-linked dimers.

The catalysed reaction is alpha-D-glucosamine 6-phosphate + H2O = beta-D-fructose 6-phosphate + NH4(+). The protein operates within amino-sugar metabolism; N-acetylneuraminate degradation; D-fructose 6-phosphate from N-acetylneuraminate: step 5/5. Its activity is regulated as follows. Allosterically activated by N-acetylglucosamine 6-phosphate (GlcNAc6P). Functionally, catalyzes the reversible isomerization-deamination of glucosamine 6-phosphate (GlcN6P) to form fructose 6-phosphate (Fru6P) and ammonium ion. This Shigella dysenteriae serotype 1 (strain Sd197) protein is Glucosamine-6-phosphate deaminase.